A 1076-amino-acid polypeptide reads, in one-letter code: Zinc-regulated protein 8 (1076 aa).

Residues 1 to 11 (MRSFIKAHKKS) show a composition bias toward basic residues. Disordered regions lie at residues 1 to 66 (MRSF…PGFE), 85 to 162 (SNLN…RTTD), 190 to 223 (PASP…TSPS), and 234 to 253 (KNKG…SSKK). Residues 23 to 34 (NFSGNTNNSSQR) are compositionally biased toward polar residues. Residues 93 to 106 (STPTTSTNQTTSNS) are compositionally biased toward low complexity. Residues 107–117 (FVLQNPPTKNT) are compositionally biased toward polar residues. A compositionally biased stretch (pro residues) spans 118-128 (GPPPPLPPPLF). Composition is skewed to polar residues over residues 193-206 (PASN…SKQF) and 214-223 (ENLTSTTSPS). Phosphoserine occurs at positions 275 and 354. 3 disordered regions span residues 357 to 450 (IRHG…DDES), 534 to 557 (LSDD…ESDN), and 566 to 585 (GKET…SLGE). Over residues 362–378 (LQSSPSKVNKNDSQNET) the composition is skewed to polar residues. 2 positions are modified to phosphoserine: Ser-403 and Ser-407. The span at 408 to 418 (VNEKETHKAND) shows a compositional bias: basic and acidic residues. A compositionally biased stretch (acidic residues) spans 419–450 (CNDESSENGDGDNDHDDDYDDDDDDDDDDDES). The span at 576-585 (GHHDDASLGE) shows a compositional bias: basic and acidic residues. Phosphoserine is present on residues Ser-632 and Ser-676. Disordered regions lie at residues 658–701 (NIIR…KPTV), 713–762 (SASD…PHSQ), 909–931 (RRTL…FSSV), 1000–1020 (HNVG…QISN), and 1042–1076 (PTNS…PKRA). 2 stretches are compositionally biased toward polar residues: residues 690–701 (LTGTTGSTKPTV) and 739–748 (QVSLQSSLYE).

It belongs to the ZRG8 family. As to quaternary structure, interacts with BUD27, GIS1 and SSD1.

The protein resides in the cytoplasm. The protein localises to the bud. Its subcellular location is the bud neck. It is found in the bud tip. Involved in the integrity functions of RAM, a conserved signaling network that regulates maintenance of polarized growth and daughter-cell-specific transcription. This Saccharomyces cerevisiae (strain ATCC 204508 / S288c) (Baker's yeast) protein is Zinc-regulated protein 8 (ZRG8).